The primary structure comprises 379 residues: ATP phosphoribosyltransferase regulatory subunit (379 aa).

It belongs to the class-II aminoacyl-tRNA synthetase family. HisZ subfamily. In terms of assembly, heteromultimer composed of HisG and HisZ subunits.

It is found in the cytoplasm. It functions in the pathway amino-acid biosynthesis; L-histidine biosynthesis; L-histidine from 5-phospho-alpha-D-ribose 1-diphosphate: step 1/9. Its function is as follows. Required for the first step of histidine biosynthesis. May allow the feedback regulation of ATP phosphoribosyltransferase activity by histidine. The chain is ATP phosphoribosyltransferase regulatory subunit from Paramagnetospirillum magneticum (strain ATCC 700264 / AMB-1) (Magnetospirillum magneticum).